The chain runs to 430 residues: Gamma-glutamyl phosphate reductase (430 aa).

Belongs to the gamma-glutamyl phosphate reductase family.

It localises to the cytoplasm. It catalyses the reaction L-glutamate 5-semialdehyde + phosphate + NADP(+) = L-glutamyl 5-phosphate + NADPH + H(+). It functions in the pathway amino-acid biosynthesis; L-proline biosynthesis; L-glutamate 5-semialdehyde from L-glutamate: step 2/2. Catalyzes the NADPH-dependent reduction of L-glutamate 5-phosphate into L-glutamate 5-semialdehyde and phosphate. The product spontaneously undergoes cyclization to form 1-pyrroline-5-carboxylate. The chain is Gamma-glutamyl phosphate reductase from Rhodopseudomonas palustris (strain TIE-1).